A 717-amino-acid polypeptide reads, in one-letter code: DNA polymerase iota (717 aa).

Residues 1–22 (MEPLHAGAAGSSRAVCSQGPPT) form a disordered region. A UmuC domain is found at 30 to 243 (IVHVDLDCFY…NHIKEIPGIG (214 aa)). 2 residues coordinate Mg(2+): aspartate 34 and leucine 35. Residues tyrosine 39 and arginine 71 each coordinate a 2'-deoxyribonucleoside 5'-triphosphate. Aspartate 126 is a binding site for Mg(2+). Glutamate 127 acts as the Proton acceptor in catalysis. 2 DNA-binding regions span residues 300-307 (QSFSEEDT) and 343-360 (RLVI…ESRQ). Positions 500 to 517 (VDQEVFKQLPADIQEEIL) match the Ubiquitin-binding 1 (UBM1) motif. Disordered stretches follow at residues 549 to 589 (QMQA…SHPS), 603 to 622 (KDEQ…FSST), and 644 to 687 (HRTV…DIDP). Positions 575 to 589 (PGTSGLSPGSTSHPS) are enriched in low complexity. Polar residues-rich tracts occupy residues 607–622 (TSQG…FSST) and 652–662 (QTATASHQGLE). Residues 665–679 (QGLESRELDSAEEKL) show a composition bias toward basic and acidic residues. A Ubiquitin-binding 2 (UBM2) motif is present at residues 685–702 (IDPQVFYELPEEVQKELM).

The protein belongs to the DNA polymerase type-Y family. As to quaternary structure, interacts with POLH. Interacts with REV1. Interacts with ubiquitin. Mg(2+) is required as a cofactor. Requires Mn(2+) as cofactor. In terms of processing, monoubiquitinated. Protein monoubiquitination prevents POLI binding to ubiquitin via the ubiquitin-binding motif 1 and ubiquitin-binding motif 2. Detected in testis, and at very low levels in spleen, lung and brain. Detected in round spermatids, but not in prophase spermatocytes.

The protein localises to the nucleus. The enzyme catalyses DNA(n) + a 2'-deoxyribonucleoside 5'-triphosphate = DNA(n+1) + diphosphate. Functionally, error-prone DNA polymerase specifically involved in DNA repair. Plays an important role in translesion synthesis, where the normal high-fidelity DNA polymerases cannot proceed and DNA synthesis stalls. Favors Hoogsteen base-pairing in the active site. Inserts the correct base with high-fidelity opposite an adenosine template. Exhibits low fidelity and efficiency opposite a thymidine template, where it will preferentially insert guanosine. May play a role in hypermutation of immunoglobulin genes. Forms a Schiff base with 5'-deoxyribose phosphate at abasic sites, but may not have lyase activity. This chain is DNA polymerase iota (Poli), found in Mus musculus (Mouse).